A 428-amino-acid chain; its full sequence is Isocitrate dehydrogenase [NADP], mitochondrial (428 aa).

A mitochondrion-targeting transit peptide spans 1-16; the sequence is MSMLSRRLFSTSRLAA. Residues 91–93 and R98 each bind NADP(+); that span reads TIT. Position 93 (T93) interacts with substrate. Substrate-binding positions include 110-116, R125, and R148; that span reads SPNGTIR. Residue D269 coordinates Mn(2+). NADP(+) is bound at residue K277. D292 serves as a coordination point for Mn(2+). NADP(+) is bound by residues 327-332 and N345; that span reads GTVTRH.

This sequence belongs to the isocitrate and isopropylmalate dehydrogenases family. In terms of assembly, homodimer. Mg(2+) is required as a cofactor. Mn(2+) serves as cofactor.

The protein localises to the mitochondrion. It catalyses the reaction D-threo-isocitrate + NADP(+) = 2-oxoglutarate + CO2 + NADPH. Its activity is regulated as follows. The enzyme is subject to end product inhibition by NADPH and 2-oxoglutarate. In terms of biological role, mitochondrial IDP1 may regulate flux through the tricarboxylic acid cycle and respiration. Its probably critical function is the production of NADPH. The sequence is that of Isocitrate dehydrogenase [NADP], mitochondrial (IDP1) from Saccharomyces cerevisiae (strain ATCC 204508 / S288c) (Baker's yeast).